Reading from the N-terminus, the 274-residue chain is Large ribosomal subunit protein uL2 (274 aa).

Disordered regions lie at residues 36 to 61 (QKSK…HKQR) and 223 to 274 (VAMN…RRKR). Over residues 37-46 (KSKTGGRNSN) the composition is skewed to polar residues. 2 stretches are compositionally biased toward basic residues: residues 50–61 (TTRHRGGGHKQR) and 254–274 (KGHK…RRKR).

This sequence belongs to the universal ribosomal protein uL2 family. As to quaternary structure, part of the 50S ribosomal subunit. Forms a bridge to the 30S subunit in the 70S ribosome.

In terms of biological role, one of the primary rRNA binding proteins. Required for association of the 30S and 50S subunits to form the 70S ribosome, for tRNA binding and peptide bond formation. It has been suggested to have peptidyltransferase activity; this is somewhat controversial. Makes several contacts with the 16S rRNA in the 70S ribosome. The sequence is that of Large ribosomal subunit protein uL2 from Halorhodospira halophila (strain DSM 244 / SL1) (Ectothiorhodospira halophila (strain DSM 244 / SL1)).